The chain runs to 1079 residues: Adhesion G-protein coupled receptor F3 (1079 aa).

An N-terminal signal peptide occupies residues 1–25 (MVCSAAPLLLLATTLPLLGSPVAQA). Topologically, residues 26–775 (SQPVSETGVR…EEPALALLTQ (750 aa)) are extracellular. 6 N-linked (GlcNAc...) asparagine glycosylation sites follow: Asn188, Asn264, Asn301, Asn382, Asn441, and Asn648. The 167-residue stretch at 599-765 (HPFAFSLPNV…SVLMSPHTVP (167 aa)) folds into the GAIN-B domain. 2 cysteine pairs are disulfide-bonded: Cys715/Cys747 and Cys734/Cys749. Residues 715-765 (CVFWDHSLFQGRGGWSKEGCQAQVASASPTAQCLCQHLTAFSVLMSPHTVP) form a GPS region. Residues 776-796 (VGLGASILALLVCLGVYWLVW) traverse the membrane as a helical segment. Over 797–811 (RVVVRNKISYFRHAA) the chain is Cytoplasmic. A helical membrane pass occupies residues 812–832 (LLNMVFCLLAADTCFLGAPFL). The Extracellular portion of the chain corresponds to 833–851 (SPGPRSPLCLAAAFLCHFL). A helical membrane pass occupies residues 852 to 874 (YLATFFWMLAQALVLAHQLLFVF). The Cytoplasmic segment spans residues 875 to 881 (HQLAKHR). A helical membrane pass occupies residues 882–902 (VLPLMVLLGYLCPLGLAGVTL). The Extracellular portion of the chain corresponds to 903–928 (GLYLPQGQYLREGECWLDGKGGALYT). Residues 929–949 (FVGPVLAIIGVNGLVLAMAML) traverse the membrane as a helical segment. The Cytoplasmic portion of the chain corresponds to 950–973 (KLLRPSLSEGPPAEKRQALLGVIK). A helical transmembrane segment spans residues 974–994 (ALLILTPIFGLTWGLGLATLL). The Extracellular portion of the chain corresponds to 995 to 1002 (EEVSTVPH). The helical transmembrane segment at 1003-1023 (YIFTILNTLQGVFILLFGCLM) threads the bilayer. Residues 1024–1079 (DRKIQEALRKRFCRAQAPSSTISLVSCCLQILSCASKSMSEGIPWPSSEDMGTARS) lie on the Cytoplasmic side of the membrane.

This sequence belongs to the G-protein coupled receptor 2 family. Adhesion G-protein coupled receptor (ADGR) subfamily. In terms of assembly, heterodimer of 2 chains generated by proteolytic processing; the large extracellular N-terminal fragment and the membrane-bound C-terminal fragment predominantly remain associated and non-covalently linked. Autoproteolytically processed at the GPS region of the GAIN-B domain; this cleavage modulates receptor activity.

Its subcellular location is the membrane. Functionally, orphan receptor. The sequence is that of Adhesion G-protein coupled receptor F3 (ADGRF3) from Homo sapiens (Human).